Here is a 403-residue protein sequence, read N- to C-terminus: Na(+)-translocating NADH-quinone reductase subunit B (403 aa).

The next 9 membrane-spanning stretches (helical) occupy residues 56 to 76 (MMIT…WNTG), 121 to 141 (AYFL…EVLF), 163 to 183 (ILPP…GVVI), 220 to 240 (WTAV…SGGI), 265 to 285 (TSTL…IASW), 287 to 307 (IVSG…LIGS), 312 to 332 (MFAM…GMFF), 348 to 368 (WIFG…NPAF), and 371 to 391 (GMML…HFVV). Position 230 is an FMN phosphoryl threonine (T230).

This sequence belongs to the NqrB/RnfD family. As to quaternary structure, composed of six subunits; NqrA, NqrB, NqrC, NqrD, NqrE and NqrF. Requires FMN as cofactor.

It localises to the cell inner membrane. The enzyme catalyses a ubiquinone + n Na(+)(in) + NADH + H(+) = a ubiquinol + n Na(+)(out) + NAD(+). NQR complex catalyzes the reduction of ubiquinone-1 to ubiquinol by two successive reactions, coupled with the transport of Na(+) ions from the cytoplasm to the periplasm. NqrA to NqrE are probably involved in the second step, the conversion of ubisemiquinone to ubiquinol. The chain is Na(+)-translocating NADH-quinone reductase subunit B from Ectopseudomonas mendocina (strain ymp) (Pseudomonas mendocina).